A 244-amino-acid chain; its full sequence is tRNA (guanine-N(7)-)-methyltransferase (244 aa).

S-adenosyl-L-methionine-binding residues include E75, E100, D127, and D150. D150 is a catalytic residue. Substrate is bound by residues K154, D186, and 223–226 (TRFE).

It belongs to the class I-like SAM-binding methyltransferase superfamily. TrmB family.

The catalysed reaction is guanosine(46) in tRNA + S-adenosyl-L-methionine = N(7)-methylguanosine(46) in tRNA + S-adenosyl-L-homocysteine. It participates in tRNA modification; N(7)-methylguanine-tRNA biosynthesis. Functionally, catalyzes the formation of N(7)-methylguanine at position 46 (m7G46) in tRNA. The polypeptide is tRNA (guanine-N(7)-)-methyltransferase (Xylella fastidiosa (strain M12)).